The sequence spans 87 residues: DNA-directed RNA polymerase subunit omega (87 aa).

This sequence belongs to the RNA polymerase subunit omega family. As to quaternary structure, the RNAP catalytic core consists of 2 alpha, 1 beta, 1 beta' and 1 omega subunit. When a sigma factor is associated with the core the holoenzyme is formed, which can initiate transcription.

It carries out the reaction RNA(n) + a ribonucleoside 5'-triphosphate = RNA(n+1) + diphosphate. Promotes RNA polymerase assembly. Latches the N- and C-terminal regions of the beta' subunit thereby facilitating its interaction with the beta and alpha subunits. This Pseudomonas fluorescens (strain ATCC BAA-477 / NRRL B-23932 / Pf-5) protein is DNA-directed RNA polymerase subunit omega.